Here is a 330-residue protein sequence, read N- to C-terminus: Replication factor C small subunit (330 aa).

48 to 55 (GPPGTGKT) is a binding site for ATP.

It belongs to the activator 1 small subunits family. RfcS subfamily. Heteropentamer composed of four small subunits (RfcS) and one large subunit (RfcL). A homotetramer of this subunit interacts with PCNA heterodimer PCNA1-PCNA2.

In terms of biological role, part of the RFC clamp loader complex which loads the PCNA sliding clamp onto DNA. The complex possesses DNA-dependent ATPase activity. The polypeptide is Replication factor C small subunit (rfcS) (Saccharolobus solfataricus (strain ATCC 35092 / DSM 1617 / JCM 11322 / P2) (Sulfolobus solfataricus)).